The chain runs to 511 residues: Histidine ammonia-lyase (511 aa).

The segment at residues 142–144 (ASG) is a cross-link (5-imidazolinone (Ala-Gly)). Serine 143 bears the 2,3-didehydroalanine (Ser) mark.

It belongs to the PAL/histidase family. Contains an active site 4-methylidene-imidazol-5-one (MIO), which is formed autocatalytically by cyclization and dehydration of residues Ala-Ser-Gly.

The protein localises to the cytoplasm. The catalysed reaction is L-histidine = trans-urocanate + NH4(+). It participates in amino-acid degradation; L-histidine degradation into L-glutamate; N-formimidoyl-L-glutamate from L-histidine: step 1/3. The protein is Histidine ammonia-lyase of Rhizobium rhizogenes (strain K84 / ATCC BAA-868) (Agrobacterium radiobacter).